Reading from the N-terminus, the 184-residue chain is Shikimate kinase (184 aa).

Gly-17–Thr-22 lines the ATP pocket. Thr-21 is a binding site for Mg(2+). The substrate site is built by Asp-39, Arg-63, and Gly-85. Residue Arg-123 participates in ATP binding. Residue Arg-142 participates in substrate binding.

The protein belongs to the shikimate kinase family. As to quaternary structure, monomer. The cofactor is Mg(2+).

Its subcellular location is the cytoplasm. It catalyses the reaction shikimate + ATP = 3-phosphoshikimate + ADP + H(+). The protein operates within metabolic intermediate biosynthesis; chorismate biosynthesis; chorismate from D-erythrose 4-phosphate and phosphoenolpyruvate: step 5/7. In terms of biological role, catalyzes the specific phosphorylation of the 3-hydroxyl group of shikimic acid using ATP as a cosubstrate. This is Shikimate kinase from Burkholderia thailandensis (strain ATCC 700388 / DSM 13276 / CCUG 48851 / CIP 106301 / E264).